A 262-amino-acid chain; its full sequence is uncharacterized protein (262 aa).

A coiled-coil region spans residues 41-118 (ELQKNEKIDK…EEKAEDFINK (78 aa)).

This is an uncharacterized protein from Plasmodium falciparum (isolate 3D7).